The following is a 398-amino-acid chain: Chalcone synthase 1 (398 aa).

Cys-167 is an active-site residue.

The protein belongs to the thiolase-like superfamily. Chalcone/stilbene synthases family.

It catalyses the reaction (E)-4-coumaroyl-CoA + 3 malonyl-CoA + 3 H(+) = 2',4,4',6'-tetrahydroxychalcone + 3 CO2 + 4 CoA. It participates in secondary metabolite biosynthesis; flavonoid biosynthesis. The primary product of this enzyme is 4,2',4',6'-tetrahydroxychalcone (also termed naringenin-chalcone or chalcone) which can under specific conditions spontaneously isomerize into naringenin. In Gerbera hybrida (Daisy), this protein is Chalcone synthase 1 (CHS1).